Reading from the N-terminus, the 542-residue chain is Cytochrome P450 monooxygenase sdnH (542 aa).

The helical transmembrane segment at 25–45 (LYVAGGILGAFTVYSIILVVY) threads the bilayer. Residues 141-160 (IIPPRGLGQEDSIGSTRSHD) form a disordered region. Residues 340–360 (FMGAGTYPTAATLIFVAYYIL) form a helical membrane-spanning segment. Residue Cys-483 participates in heme binding. Asn-506 carries an N-linked (GlcNAc...) asparagine glycan.

It belongs to the cytochrome P450 family. The cofactor is heme.

The protein localises to the membrane. The protein operates within antibiotic biosynthesis. Functionally, cytochrome P450 monooxygenase; part of the gene cluster that mediates the biosynthesis of sordarin and hypoxysordarin, glycoside antibiotics with a unique tetracyclic diterpene aglycone structure. First, the geranylgeranyl diphosphate synthase sdnC constructs GGDP from farnesyl diphosphate and isopentenyl diphosphate. The diterpene cyclase sdnA then catalyzes the cyclization of GGDP to afford cycloaraneosene. Cycloaraneosene is then hydroxylated four times by the putative cytochrome P450 monooxygenases sdnB, sdnE, sdnF and sdnH to give a hydroxylated cycloaraneosene derivative such as cycloaraneosene-8,9,13,19-tetraol. Although the order of the hydroxylations is unclear, at least C8, C9 and C13 of the cycloaraneosene skeleton are hydroxylated before the sordaricin formation. Dehydration of the 13-hydroxy group of the hydroxylated cycloaraneosene derivative might be catalyzed by an unassigned hypothetical protein such as sdnG and sdnP to construct the cyclopentadiene moiety. The FAD-dependent oxidoreductase sdnN is proposed to catalyze the oxidation at C9 of the hydroxylated cycloaraneosene derivative and also catalyze the Baeyer-Villiger oxidation to give the lactone intermediate. The presumed lactone intermediate would be hydrolyzed to give an acrolein moiety and a carboxylate moiety. Then, [4+2]cycloaddition would occur between the acrolein moiety and the cyclopentadiene moiety to give sordaricin. SdnN might also be involved in the [4+2]cycloaddition after the hypothesized oxidation to accommodate the oxidized product and prompt the [4+2]cycloaddition. GDP-6-deoxy-D-altrose may be biosynthesized from GDP-D-mannose by the putative GDP-mannose-4,6-dehydratase sdnI and the short-chain dehydrogenase sdnK. The glycosyltransferase sdnJ catalyzes the attachment of 6-deoxy-D-altrose onto the 19-hydroxy group of sordaricin to give 4'-O-demethylsordarin. The methyltransferase sdnD would complete the biosynthesis of sordarin. Sordarin can be further modified into hypoxysordarin. The unique acyl chain at the 3'-hydroxy group of hypoxysordarin would be constructed by an iterative type I PKS sdnO and the trans-acting polyketide methyltransferase sdnL. SdnL would be responsible for the introduction of an alpha-methyl group of the polyketide chain. Alternatively, the beta-lactamase-like protein sdnR might be responsible for the cleavage and transfer of the polyketide chain from the PKS sdnO to sordarin. Two putative cytochrome P450 monooxygenases, sdnQ and sdnT, might catalyze the epoxidations of the polyketide chain to complete the biosynthesis of hypoxysordarin. Transcriptional regulators sdnM and sdnS are presumably encoded for the transcriptional regulation of the expression of the sdn gene cluster. This is Cytochrome P450 monooxygenase sdnH from Sordaria araneosa (Pleurage araneosa).